Consider the following 277-residue polypeptide: Small ribosomal subunit protein uS5 (277 aa).

A disordered region spans residues 18 to 40 (AAGRPSWSWQRPGERARTPGRKA). A compositionally biased stretch (basic and acidic residues) spans 29 to 40 (PGERARTPGRKA). Positions 87–150 (LKDEVLKIMP…ILAKLSIIPV (64 aa)) constitute an S5 DRBM domain.

This sequence belongs to the universal ribosomal protein uS5 family. Component of the small ribosomal subunit.

It localises to the cytoplasm. The protein localises to the nucleus. It is found in the nucleolus. In terms of biological role, component of the ribosome, a large ribonucleoprotein complex responsible for the synthesis of proteins in the cell. The small ribosomal subunit (SSU) binds messenger RNAs (mRNAs) and translates the encoded message by selecting cognate aminoacyl-transfer RNA (tRNA) molecules. The large subunit (LSU) contains the ribosomal catalytic site termed the peptidyl transferase center (PTC), which catalyzes the formation of peptide bonds, thereby polymerizing the amino acids delivered by tRNAs into a polypeptide chain. The nascent polypeptides leave the ribosome through a tunnel in the LSU and interact with protein factors that function in enzymatic processing, targeting, and the membrane insertion of nascent chains at the exit of the ribosomal tunnel. Plays a role in the assembly and function of the 40S ribosomal subunit. Mutations in this protein affects the control of translational fidelity. Involved in nucleolar processing of pre-18S ribosomal RNA and ribosome assembly. In Ictalurus punctatus (Channel catfish), this protein is Small ribosomal subunit protein uS5 (rps2).